A 215-amino-acid chain; its full sequence is Thymidylate kinase (215 aa).

13–20 (GLEGAGKS) contributes to the ATP binding site.

The protein belongs to the thymidylate kinase family.

The enzyme catalyses dTMP + ATP = dTDP + ADP. Its function is as follows. Phosphorylation of dTMP to form dTDP in both de novo and salvage pathways of dTTP synthesis. This is Thymidylate kinase from Shewanella frigidimarina (strain NCIMB 400).